A 174-amino-acid polypeptide reads, in one-letter code: Ribosome rescue factor SmrB (174 aa).

Positions 96 to 171 (LDLHGLTQQQ…GDAAILVLIE (76 aa)) constitute a Smr domain.

It belongs to the SmrB family. In terms of assembly, associates with collided ribosomes, but not with correctly translating polysomes.

In terms of biological role, acts as a ribosome collision sensor. Detects stalled/collided disomes (pairs of ribosomes where the leading ribosome is stalled and a second ribosome has collided with it) and endonucleolytically cleaves mRNA at the 5' boundary of the stalled ribosome. Stalled/collided disomes form a new interface (primarily via the 30S subunits) that binds SmrB. Cleaved mRNA becomes available for tmRNA ligation, leading to ribosomal subunit dissociation and rescue of stalled ribosomes. In Tolumonas auensis (strain DSM 9187 / NBRC 110442 / TA 4), this protein is Ribosome rescue factor SmrB.